The primary structure comprises 156 residues: Cyclic pyranopterin monophosphate synthase (156 aa).

Residues 75-77 (LCH) and 111-112 (ME) contribute to the substrate site. Residue Asp126 is part of the active site.

The protein belongs to the MoaC family. Homohexamer; trimer of dimers.

It catalyses the reaction (8S)-3',8-cyclo-7,8-dihydroguanosine 5'-triphosphate = cyclic pyranopterin phosphate + diphosphate. It participates in cofactor biosynthesis; molybdopterin biosynthesis. Catalyzes the conversion of (8S)-3',8-cyclo-7,8-dihydroguanosine 5'-triphosphate to cyclic pyranopterin monophosphate (cPMP). In Caulobacter sp. (strain K31), this protein is Cyclic pyranopterin monophosphate synthase.